The following is a 369-amino-acid chain: 2-aminoethylphosphonate--pyruvate transaminase (369 aa).

Residue lysine 193 is modified to N6-(pyridoxal phosphate)lysine.

The protein belongs to the class-V pyridoxal-phosphate-dependent aminotransferase family. PhnW subfamily. Homodimer. It depends on pyridoxal 5'-phosphate as a cofactor.

It carries out the reaction (2-aminoethyl)phosphonate + pyruvate = phosphonoacetaldehyde + L-alanine. Functionally, involved in phosphonate degradation. The polypeptide is 2-aminoethylphosphonate--pyruvate transaminase (Burkholderia pseudomallei (strain 668)).